The chain runs to 652 residues: Probable endo-1,3(4)-beta-glucanase AFUB_029980 (652 aa).

An N-terminal signal peptide occupies residues 1–21 (MAPSSLLLSVGSLITSSLVSA). Positions 36–289 (ESWQGESFIN…WAGNVFAEST (254 aa)) constitute a GH16 domain. N-linked (GlcNAc...) asparagine glycosylation occurs at Asn-64. Glu-145 acts as the Nucleophile in catalysis. Catalysis depends on Glu-150, which acts as the Proton donor. N-linked (GlcNAc...) asparagine glycosylation is found at Asn-200 and Asn-208. Residues 379–423 (NTVATSAADHATPSSAETTTVPAATGAPSVSATEGGDSELESTST) are disordered. Polar residues predominate over residues 390-410 (TPSSAETTTVPAATGAPSVSA). An N-linked (GlcNAc...) asparagine glycan is attached at Asn-453. The interval 509–551 (SEIPTAPPEPVSQAVSTGSFDDSDTAQGDSEEQGSIASASVAP) is disordered. Residues 529 to 540 (DDSDTAQGDSEE) are compositionally biased toward acidic residues. Asn-630 is lipidated: GPI-anchor amidated asparagine. Residues 631–652 (GANRMSVGLSGLIGVMFIAALA) constitute a propeptide, removed in mature form.

Belongs to the glycosyl hydrolase 16 family.

The protein resides in the cell membrane. It carries out the reaction Endohydrolysis of (1-&gt;3)- or (1-&gt;4)-linkages in beta-D-glucans when the glucose residue whose reducing group is involved in the linkage to be hydrolyzed is itself substituted at C-3.. Its function is as follows. Mixed-linked glucanase involved in the degradation of complex natural cellulosic substrates. This is Probable endo-1,3(4)-beta-glucanase AFUB_029980 from Aspergillus fumigatus (strain CBS 144.89 / FGSC A1163 / CEA10) (Neosartorya fumigata).